A 251-amino-acid chain; its full sequence is Cytochrome c oxidase subunit 2 (251 aa).

The next 2 helical transmembrane spans lie at 42–62 (NIMF…FTIV) and 83–103 (IIWT…SFIL). Residues His-186, Cys-221, Glu-223, Cys-225, His-229, and Met-232 each coordinate Cu cation. Residue Glu-223 coordinates Mg(2+).

It belongs to the cytochrome c oxidase subunit 2 family. As to quaternary structure, component of the cytochrome c oxidase (complex IV, CIV), a multisubunit enzyme composed of a catalytic core of 3 subunits and several supernumerary subunits. The complex exists as a monomer or a dimer and forms supercomplexes (SCs) in the inner mitochondrial membrane with ubiquinol-cytochrome c oxidoreductase (cytochrome b-c1 complex, complex III, CIII). Cu cation serves as cofactor.

It is found in the mitochondrion inner membrane. It catalyses the reaction 4 Fe(II)-[cytochrome c] + O2 + 8 H(+)(in) = 4 Fe(III)-[cytochrome c] + 2 H2O + 4 H(+)(out). In terms of biological role, component of the cytochrome c oxidase, the last enzyme in the mitochondrial electron transport chain which drives oxidative phosphorylation. The respiratory chain contains 3 multisubunit complexes succinate dehydrogenase (complex II, CII), ubiquinol-cytochrome c oxidoreductase (cytochrome b-c1 complex, complex III, CIII) and cytochrome c oxidase (complex IV, CIV), that cooperate to transfer electrons derived from NADH and succinate to molecular oxygen, creating an electrochemical gradient over the inner membrane that drives transmembrane transport and the ATP synthase. Cytochrome c oxidase is the component of the respiratory chain that catalyzes the reduction of oxygen to water. Electrons originating from reduced cytochrome c in the intermembrane space (IMS) are transferred via the dinuclear copper A center (CU(A)) of subunit 2 and heme A of subunit 1 to the active site in subunit 1, a binuclear center (BNC) formed by heme A3 and copper B (CU(B)). The BNC reduces molecular oxygen to 2 water molecules using 4 electrons from cytochrome c in the IMS and 4 protons from the mitochondrial matrix. This chain is Cytochrome c oxidase subunit 2 (COX2), found in Candida glabrata (strain ATCC 2001 / BCRC 20586 / JCM 3761 / NBRC 0622 / NRRL Y-65 / CBS 138) (Yeast).